We begin with the raw amino-acid sequence, 119 residues long: Small ribosomal subunit protein uS10 (119 aa).

At Ala-2 the chain carries N-acetylalanine. Lys-4 is covalently cross-linked (Glycyl lysine isopeptide (Lys-Gly) (interchain with G-Cter in ubiquitin)). The residue at position 8 (Lys-8) is an N6-succinyllysine; alternate. Residue Lys-8 forms a Glycyl lysine isopeptide (Lys-Gly) (interchain with G-Cter in ubiquitin); alternate linkage. Thr-9 bears the Phosphothreonine mark. Lys-34 and Lys-75 each carry N6-acetyllysine. Phosphoserine is present on Ser-93.

This sequence belongs to the universal ribosomal protein uS10 family. In terms of assembly, component of the 40S small ribosomal subunit. Post-translationally, polyubiquitinated by ZNF598 via 'Lys-63'-linked ubiquitin chains when a ribosome has stalled, initiating the ribosome quality control (RQC) pathway to degrade the potentially detrimental aberrant nascent polypeptide. Deubiquitinated by OTUD3 and USP21, antagonizing ZNF598 activity. Ufmylated by UFL1.

The protein localises to the cytoplasm. In terms of biological role, component of the small ribosomal subunit. The ribosome is a large ribonucleoprotein complex responsible for the synthesis of proteins in the cell. The chain is Small ribosomal subunit protein uS10 (RPS20) from Sus scrofa (Pig).